The following is a 450-amino-acid chain: MREVISIHVGQAGIQVGNACWELFCLEHGIQPDGQMPSDKTIGGGDDAFNTFFSETGAGKHVPRCVFLDLEPTVDDEVRTGTYRQLFHPEQLISGKEDAANNFARGHYTIGKEIVDLCLDRIRKLADQCTGLQGFLVFNSVGGGTGSGLGSLLLERLSVDYGKKSKLGFTVYPSPQVSTAVVEPYNSVLSTHSLLEHTDVAVMLDNEAVYDICRRNLDIERPTYTNLNRLIAQVISSLTASLRFDGALNVDVTEFQTNLVPYPRIHFMLSSYAPVISAEKAYHEQLSVAEITNSAFEPASMMAKCDPRHGKYMACCLMYRGDVVPKDVNAAVATIKTKRTIQFVDWCPTGFKCGINYQPPTVVPGGDLAKVMRAVCMISNSTAIAEVFSRIDHKFDLMYAKRAFVHWYVGEGMEEGEFSEAREDLAALEKDYEEVGIETAEGEGEEEGME.

Q11 serves as a coordination point for GTP. An N6-acetyllysine modification is found at K40. Positions 71, 140, 144, 145, 179, 206, and 228 each coordinate GTP. Residue E71 coordinates Mg(2+). Residue E254 is part of the active site.

The protein belongs to the tubulin family. In terms of assembly, dimer of alpha and beta chains. A typical microtubule is a hollow water-filled tube with an outer diameter of 25 nm and an inner diameter of 15 nM. Alpha-beta heterodimers associate head-to-tail to form protofilaments running lengthwise along the microtubule wall with the beta-tubulin subunit facing the microtubule plus end conferring a structural polarity. Microtubules usually have 13 protofilaments but different protofilament numbers can be found in some organisms and specialized cells. It depends on Mg(2+) as a cofactor. Post-translationally, acetylation of alpha chains at Lys-40 stabilizes microtubules and affects affinity and processivity of microtubule motors. This modification has a role in multiple cellular functions, ranging from cell motility, cell cycle progression or cell differentiation to intracellular trafficking and signaling.

The protein localises to the cytoplasm. It is found in the cytoskeleton. It carries out the reaction GTP + H2O = GDP + phosphate + H(+). In terms of biological role, tubulin is the major constituent of microtubules, a cylinder consisting of laterally associated linear protofilaments composed of alpha- and beta-tubulin heterodimers. Microtubules grow by the addition of GTP-tubulin dimers to the microtubule end, where a stabilizing cap forms. Below the cap, tubulin dimers are in GDP-bound state, owing to GTPase activity of alpha-tubulin. The protein is Tubulin alpha chain of Oxytricha granulifera (Ciliate).